Reading from the N-terminus, the 477-residue chain is tRNA(Ile)-lysidine synthase (477 aa).

36 to 41 (SGGADS) contributes to the ATP binding site.

This sequence belongs to the tRNA(Ile)-lysidine synthase family.

The protein localises to the cytoplasm. The catalysed reaction is cytidine(34) in tRNA(Ile2) + L-lysine + ATP = lysidine(34) in tRNA(Ile2) + AMP + diphosphate + H(+). Ligates lysine onto the cytidine present at position 34 of the AUA codon-specific tRNA(Ile) that contains the anticodon CAU, in an ATP-dependent manner. Cytidine is converted to lysidine, thus changing the amino acid specificity of the tRNA from methionine to isoleucine. The polypeptide is tRNA(Ile)-lysidine synthase (Treponema pallidum (strain Nichols)).